A 519-amino-acid polypeptide reads, in one-letter code: Galactose-1-phosphate uridylyltransferase (519 aa).

Belongs to the galactose-1-phosphate uridylyltransferase type 2 family.

The protein resides in the cytoplasm. The catalysed reaction is alpha-D-galactose 1-phosphate + UDP-alpha-D-glucose = alpha-D-glucose 1-phosphate + UDP-alpha-D-galactose. It participates in carbohydrate metabolism; galactose metabolism. This is Galactose-1-phosphate uridylyltransferase from Caldanaerobacter subterraneus subsp. tengcongensis (strain DSM 15242 / JCM 11007 / NBRC 100824 / MB4) (Thermoanaerobacter tengcongensis).